Reading from the N-terminus, the 355-residue chain is Lipoyl synthase (355 aa).

The 49-residue stretch at 7–55 (HLSKFAYREEFAGNTEVLATAAYKEDCADASTGLTPKLPLEVEFGKMSK) folds into the RPE1 insert domain. Positions 86, 91, 97, 112, 116, 119, and 325 each coordinate [4Fe-4S] cluster. Residues 98–314 (WSKKHATVMI…ERVARTKGFL (217 aa)) form the Radical SAM core domain.

It belongs to the radical SAM superfamily. Lipoyl synthase family. [4Fe-4S] cluster is required as a cofactor.

Its subcellular location is the cytoplasm. It carries out the reaction [[Fe-S] cluster scaffold protein carrying a second [4Fe-4S](2+) cluster] + N(6)-octanoyl-L-lysyl-[protein] + 2 oxidized [2Fe-2S]-[ferredoxin] + 2 S-adenosyl-L-methionine + 4 H(+) = [[Fe-S] cluster scaffold protein] + N(6)-[(R)-dihydrolipoyl]-L-lysyl-[protein] + 4 Fe(3+) + 2 hydrogen sulfide + 2 5'-deoxyadenosine + 2 L-methionine + 2 reduced [2Fe-2S]-[ferredoxin]. Its pathway is protein modification; protein lipoylation via endogenous pathway; protein N(6)-(lipoyl)lysine from octanoyl-[acyl-carrier-protein]: step 2/2. Functionally, catalyzes the radical-mediated insertion of two sulfur atoms into the C-6 and C-8 positions of the octanoyl moiety bound to the lipoyl domains of lipoate-dependent enzymes, thereby converting the octanoylated domains into lipoylated derivatives. This chain is Lipoyl synthase, found in Rickettsia bellii (strain RML369-C).